A 529-amino-acid chain; its full sequence is Peptide chain release factor 3 (529 aa).

A tr-type G domain is found at alanine 11 to methionine 280. GTP-binding positions include serine 20–threonine 27, aspartate 88–histidine 92, and asparagine 142–aspartate 145.

This sequence belongs to the TRAFAC class translation factor GTPase superfamily. Classic translation factor GTPase family. PrfC subfamily.

It is found in the cytoplasm. Increases the formation of ribosomal termination complexes and stimulates activities of RF-1 and RF-2. It binds guanine nucleotides and has strong preference for UGA stop codons. It may interact directly with the ribosome. The stimulation of RF-1 and RF-2 is significantly reduced by GTP and GDP, but not by GMP. The polypeptide is Peptide chain release factor 3 (Salmonella gallinarum (strain 287/91 / NCTC 13346)).